The chain runs to 106 residues: Urease subunit beta (106 aa).

The protein belongs to the urease beta subunit family. In terms of assembly, heterotrimer of UreA (gamma), UreB (beta) and UreC (alpha) subunits. Three heterotrimers associate to form the active enzyme.

It is found in the cytoplasm. The enzyme catalyses urea + 2 H2O + H(+) = hydrogencarbonate + 2 NH4(+). The protein operates within nitrogen metabolism; urea degradation; CO(2) and NH(3) from urea (urease route): step 1/1. This Prochlorococcus marinus (strain MIT 9312) protein is Urease subunit beta.